The following is a 167-amino-acid chain: 6,7-dimethyl-8-ribityllumazine synthase (167 aa).

5-amino-6-(D-ribitylamino)uracil-binding positions include Phe-24, 58-60 (ALE), and 82-84 (AVV). Residue 87–88 (ET) coordinates (2S)-2-hydroxy-3-oxobutyl phosphate. His-90 acts as the Proton donor in catalysis. Asn-115 is a binding site for 5-amino-6-(D-ribitylamino)uracil. Residue Arg-129 participates in (2S)-2-hydroxy-3-oxobutyl phosphate binding.

The protein belongs to the DMRL synthase family.

It catalyses the reaction (2S)-2-hydroxy-3-oxobutyl phosphate + 5-amino-6-(D-ribitylamino)uracil = 6,7-dimethyl-8-(1-D-ribityl)lumazine + phosphate + 2 H2O + H(+). It participates in cofactor biosynthesis; riboflavin biosynthesis; riboflavin from 2-hydroxy-3-oxobutyl phosphate and 5-amino-6-(D-ribitylamino)uracil: step 1/2. Functionally, catalyzes the formation of 6,7-dimethyl-8-ribityllumazine by condensation of 5-amino-6-(D-ribitylamino)uracil with 3,4-dihydroxy-2-butanone 4-phosphate. This is the penultimate step in the biosynthesis of riboflavin. The chain is 6,7-dimethyl-8-ribityllumazine synthase from Cupriavidus pinatubonensis (strain JMP 134 / LMG 1197) (Cupriavidus necator (strain JMP 134)).